Reading from the N-terminus, the 101-residue chain is Small ribosomal subunit protein bS18c (101 aa).

It belongs to the bacterial ribosomal protein bS18 family. Part of the 30S ribosomal subunit.

It localises to the plastid. Its subcellular location is the chloroplast. The protein is Small ribosomal subunit protein bS18c of Morus indica (Mulberry).